The primary structure comprises 398 residues: Cytochrome P450 165B3 (398 aa).

Position 347 (cysteine 347) interacts with heme.

The protein belongs to the cytochrome P450 family. Heme is required as a cofactor.

The protein operates within antibiotic biosynthesis; vancomycin biosynthesis. Involved in the coupling of aromatic side chains of the heptapeptide of vancomycin. The protein is Cytochrome P450 165B3 (cyp165B3) of Amycolatopsis orientalis (Nocardia orientalis).